Consider the following 429-residue polypeptide: Enolase (429 aa).

A (2R)-2-phosphoglycerate-binding site is contributed by glutamine 168. Glutamate 210 acts as the Proton donor in catalysis. Mg(2+)-binding residues include aspartate 247, glutamate 288, and aspartate 315. 4 residues coordinate (2R)-2-phosphoglycerate: lysine 340, arginine 369, serine 370, and lysine 391. The active-site Proton acceptor is lysine 340.

It belongs to the enolase family. Mg(2+) is required as a cofactor.

It localises to the cytoplasm. Its subcellular location is the secreted. The protein localises to the cell surface. It catalyses the reaction (2R)-2-phosphoglycerate = phosphoenolpyruvate + H2O. The protein operates within carbohydrate degradation; glycolysis; pyruvate from D-glyceraldehyde 3-phosphate: step 4/5. In terms of biological role, catalyzes the reversible conversion of 2-phosphoglycerate (2-PG) into phosphoenolpyruvate (PEP). It is essential for the degradation of carbohydrates via glycolysis. This is Enolase from Nostoc punctiforme (strain ATCC 29133 / PCC 73102).